We begin with the raw amino-acid sequence, 243 residues long: Carboxy-S-adenosyl-L-methionine synthase (243 aa).

S-adenosyl-L-methionine-binding positions include Y40, 65–67 (GCS), 90–91 (DN), 118–119 (DI), N133, and R200.

This sequence belongs to the class I-like SAM-binding methyltransferase superfamily. Cx-SAM synthase family. Homodimer.

It catalyses the reaction prephenate + S-adenosyl-L-methionine = carboxy-S-adenosyl-L-methionine + 3-phenylpyruvate + H2O. Its function is as follows. Catalyzes the conversion of S-adenosyl-L-methionine (SAM) to carboxy-S-adenosyl-L-methionine (Cx-SAM). This chain is Carboxy-S-adenosyl-L-methionine synthase, found in Shewanella halifaxensis (strain HAW-EB4).